The sequence spans 2167 residues: MKGLLWSKNRKSSTASASSSSTSTSHKTTTASTASSSSPSSSSQTIRNSTSGASPYMHSHHHHGQGHSHHRGEDNNRDKRKSSVFPPSKQYTSTSSSQVNLGMYHSDTNTRSSRSIASTLKDDSPSVCSEDEISNSSSQKSNAQDETPIAYKKSAHSKDSLLPSRSSSLSPPQSRCSTGTTLEKSLNTSGISNSSGTNNNNSNNNNDNEQKQRNVIHLNSENYDTTVFKTGWVNKSHGQTVATNYNSSMTAPSSSSSSSSQNLRNDAYSRNRESRFYGNDGSSLKNDDSSSTTATNSGNDVASARSSMAIDPQMLVPDYRLYRAQLKGCVLNLYKSGLNSNIKFFDPTLPASNSSIANENHQQKKQQTNNQAQAEALHQKQSFGQMGEPITLDLKYLSEVYPHPDLRQDSDGKIISGTIESLCHTVLFYPGPKQSDVPNEKSLSKTHRAVINLLLMFPLLDHFIKFLKVFNQFGLSFTKNKSRLTNNSTQFYNISPAVDDSMTQRLALTAKTILDVFPGFLLDEPMLKTIISLLDTISLHNDEISNNLKIKIANKHNELMKLTAFTRSLPMATSSTHELEIILDPSHFLSLDITTLADEVHHINLKFDKVWAPKFDYSLLYDSKFINRRIVSLNPLVFNNDQNIHFLGRLLISHLFPTNPEFSKKVTPKVRAELLDKWVQIGCRFEHLGDMVSWLAVATIICSIPVLRSSSWKYVPDQSLKTIFKDWVPTIIQLERRQRTSKSTSSVFILAPPNLDDDFTRANVISYFGDLLIHADDLPSDTKFKYLEKKINRTKNAFHKWQQRLQAIDSTRHKTNSTENVRDNDSPNNVVYQLWKFHLSQPPLNIEGIMKLSVQHEPPIIDQKAYSTIGSQRSALVTGSYLPILFNELFPNYSLFPKNTLVGAASDAKLPPPRSSARLSKSLSISEPIPIASNSHTMGSLTDDAMSSKNDNNKVTGVGKIDGPVIKEMSSKQSNKQRLLKSVRDVFNIDMDVFHISDELVFKSVYDNDGKSRPASMVIETPKRFSQHSSMLINNPATPNQKMRDSLDTTGRLSKTLENMDFFNNIGQVSDSLKESIIRVVLKSSSLEKIFDLLVLTSNIFSKLVDTKDLENYYYHQRQRGHSTRGLSDDNIGLLDYAFVKLTMDNDIFTETFFNTYKSFTTTTTVLENMAKRYVGAKSCSVSISKILDRSDDSKMKINEDTNLVSSSLYDQNFPVWDMKVTDDENINLIYMAKIQIGAAEAILHLVKNHYSDFTDDLCNNSTLLDIIKIMEQEVSTEWPTRIANSKLQKSLPENFVIETENLLTTLTDLFHGIKSAYQKQLYRPIGVNRTQKRITDILNSFNTFSFTDLNNIIDDPSFSDDMIRSFQKLHSTNYEDILEWIYQLDNFISKKFNLVSKKDWIVLFQELELLSKESLVSFFNYPLHFKSSKLINPGYLQLHEFEISNLFTWISTLILKDDNGTESLFFEKLPQSIKLLIKLHTSLTTFFVMEISNVNKSSSERLTTCKVILQILNYIRWKNGSLDLFDSEEDESPHAICPHIPAFIETAIAHAIISPESRNYELSWIKASEKLSDPTKGTQNLRSISNVLEKIDDIHIKRFIEIDDVFSKNCKNLCPCPGWFISRLLEISQFVPNMSITNSKLINFDKRRFVNNIISNVLDLIPNEREFPLDIEMSDENPSKRTTFGRILFNNFEDVNKVYRKKTKKVSESEAISERFQEQGVFNEILVNEIEKIKREARKLEVLLDQEKILKNSAALHQAVPKKNRKSVIISGTHSDNDHSYNINKNTGQTPSLGSVMESNNSARNRRDSRASFSTNRSSVVSNSSHNGVSKKIGGFFRRPFSIGGFNTSSSNYSLNSILSQEVSSNKSILPSILPEVDSMQLHDLKPSYSLKTFEIKSIMEIINHRNIPAYYYAFKIVMQNGHEYLIQTASSSDLTEWIKMIKASKRFSFHSKKYKGKTHNKIFGVPLEDVCERENTLIPTIVVKLLEEIELRGLDEVGLYRIPGSIGSINALKNAFDEEGATDNSFTLEDDRWFEVNAIAGCFKMYLRELPDSLFSHAMVNDFTDLAIKYKAHAMVNEEYKRMMNELLQKLPTCYYQTLKRIVFHLNKVHQHVVNNKMDASNLAIVFSMSFINQEDLANSMGSRLGAVQTILQDFIKNPNDYFKQ.

Disordered regions lie at residues 1 to 209, 243 to 305, and 353 to 372; these read MKGL…NDNE, TNYN…ASAR, and NSSIANENHQQKKQQTNNQA. A compositionally biased stretch (low complexity) spans 12–51; the sequence is SSTASASSSSTSTSHKTTTASTASSSSPSSSSQTIRNSTS. Residue K27 forms a Glycyl lysine isopeptide (Lys-Gly) (interchain with G-Cter in ubiquitin) linkage. Positions 58-70 are enriched in basic residues; that stretch reads HSHHHHGQGHSHH. The segment covering 89–118 has biased composition (polar residues); it reads KQYTSTSSSQVNLGMYHSDTNTRSSRSIAS. S129 is subject to Phosphoserine. The segment covering 134-145 has biased composition (polar residues); that stretch reads SNSSSQKSNAQD. Low complexity-rich tracts occupy residues 160–177 and 187–207; these read SLLPSRSSSLSPPQSRCS and NTSGISNSSGTNNNNSNNNND. Positions 243-252 are enriched in polar residues; it reads TNYNSSMTAP. S283 carries the phosphoserine modification. Residues 289–300 are compositionally biased toward low complexity; it reads SSSTTATNSGND. The Ras-GEF domain maps to 592-859; sequence DITTLADEVH…MKLSVQHEPP (268 aa). S1012 and S1016 each carry phosphoserine. T1038 carries the post-translational modification Phosphothreonine. Phosphoserine occurs at positions 1046, 1054, and 1128. The segment covering 1771-1794 has biased composition (polar residues); that stretch reads ISGTHSDNDHSYNINKNTGQTPSL. The tract at residues 1771-1828 is disordered; sequence ISGTHSDNDHSYNINKNTGQTPSLGSVMESNNSARNRRDSRASFSTNRSSVVSNSSHN. Residues 1812-1828 show a composition bias toward low complexity; the sequence is ASFSTNRSSVVSNSSHN. Residues 1846–1948 form the PH domain; that stretch reads GFNTSSSNYS…WIKMIKASKR (103 aa). The Rho-GAP domain occupies 1967–2165; the sequence is VPLEDVCERE…DFIKNPNDYF (199 aa).

Its function is as follows. GTPase-activating protein (GAP) for RHO1 and RHO2. Involved in the control of cellular morphogenesis. Required for proper bud site selection and bud emergence. The protein is GTPase-activating protein BEM2/IPL2 (BEM2) of Saccharomyces cerevisiae (strain ATCC 204508 / S288c) (Baker's yeast).